Reading from the N-terminus, the 132-residue chain is Ribosome-binding factor A (132 aa).

It belongs to the RbfA family. Monomer. Binds 30S ribosomal subunits, but not 50S ribosomal subunits or 70S ribosomes.

Its subcellular location is the cytoplasm. Its function is as follows. One of several proteins that assist in the late maturation steps of the functional core of the 30S ribosomal subunit. Associates with free 30S ribosomal subunits (but not with 30S subunits that are part of 70S ribosomes or polysomes). Required for efficient processing of 16S rRNA. May interact with the 5'-terminal helix region of 16S rRNA. This is Ribosome-binding factor A from Pseudomonas entomophila (strain L48).